Consider the following 158-residue polypeptide: Phosphopantetheine adenylyltransferase (158 aa).

Threonine 9 is a substrate binding site. Residues threonine 9 to phenylalanine 10 and histidine 17 contribute to the ATP site. Substrate contacts are provided by lysine 41, leucine 73, and arginine 87. ATP is bound by residues glycine 88–arginine 90, glutamate 98, and tryptophan 123–threonine 129.

Belongs to the bacterial CoaD family. Homohexamer. Mg(2+) is required as a cofactor.

It localises to the cytoplasm. The catalysed reaction is (R)-4'-phosphopantetheine + ATP + H(+) = 3'-dephospho-CoA + diphosphate. It functions in the pathway cofactor biosynthesis; coenzyme A biosynthesis; CoA from (R)-pantothenate: step 4/5. In terms of biological role, reversibly transfers an adenylyl group from ATP to 4'-phosphopantetheine, yielding dephospho-CoA (dPCoA) and pyrophosphate. The sequence is that of Phosphopantetheine adenylyltransferase from Histophilus somni (strain 129Pt) (Haemophilus somnus).